Consider the following 329-residue polypeptide: Ribosomal RNA small subunit methyltransferase H (329 aa).

S-adenosyl-L-methionine contacts are provided by residues G34–H36, D59, F86, D112, and Q119.

This sequence belongs to the methyltransferase superfamily. RsmH family.

It is found in the cytoplasm. It carries out the reaction cytidine(1402) in 16S rRNA + S-adenosyl-L-methionine = N(4)-methylcytidine(1402) in 16S rRNA + S-adenosyl-L-homocysteine + H(+). Specifically methylates the N4 position of cytidine in position 1402 (C1402) of 16S rRNA. This chain is Ribosomal RNA small subunit methyltransferase H, found in Chlorobium phaeobacteroides (strain DSM 266 / SMG 266 / 2430).